Here is a 423-residue protein sequence, read N- to C-terminus: Salicylate 5-hydroxylase, large oxygenase component (423 aa).

Positions 1-20 (MSEPQRLKPVFPQDPKWPGE) are disordered. One can recognise a Rieske domain in the interval 49 to 168 (WCYVGLEAEI…VAARGGAVFA (120 aa)). [2Fe-2S] cluster-binding residues include Cys91, His93, Cys111, and His114. Fe cation contacts are provided by His224, His229, and Asp370.

Belongs to the bacterial ring-hydroxylating dioxygenase alpha subunit family. As to quaternary structure, the salicylate 5-hydroxylase (S5H) multicomponent enzyme system is composed of an electron transfer component and an oxygenase component. The electron transfer component is comprised of a ferredoxin reductase (NagAa) and a ferredoxin (NagAb), and the oxygenase component is formed by a large subunit (NagG) and a small subunit (NagH). Fe cation serves as cofactor. The cofactor is [2Fe-2S] cluster.

It carries out the reaction salicylate + NADH + O2 + H(+) = 2,5-dihydroxybenzoate + NAD(+) + H2O. It functions in the pathway aromatic compound metabolism; naphthalene degradation. In terms of biological role, oxygenase component of the salicylate 5-hydroxylase (S5H) multicomponent enzyme system which catalyzes the 5-hydroxylation of salicylate to gentisate. Active only on substrates with a ring-substituted carboxylate group with an adjacent hydroxyl group. Primarily active against salicylate and substituted salicylates, but not against 2-hydroxycinnamate, 3-hydroxycinnamate, 2-hydroxyphenylacetate, 3-hydroxyphenylacetate, 2-hydroxybenzophenone, 1-hydroxy-2-naphthoate, 4-methoxysalicylate or 2-hydroxyacetophenone. The sequence is that of Salicylate 5-hydroxylase, large oxygenase component from Ralstonia sp.